A 446-amino-acid polypeptide reads, in one-letter code: COBRA-like protein 1 (446 aa).

The N-terminal stretch at 1–28 is a signal peptide; it reads MALLLLRMGVSVALLVAFFSSLIPSSEA. 9 N-linked (GlcNAc...) asparagine glycosylation sites follow: asparagine 37, asparagine 162, asparagine 170, asparagine 209, asparagine 234, asparagine 316, asparagine 331, asparagine 350, and asparagine 419. Alanine 420 is lipidated: GPI-anchor amidated alanine. Positions 421 to 446 are cleaved as a propeptide — removed in mature form; the sequence is STRVMSSILLPFITIWTALTFLMVYA.

This sequence belongs to the COBRA family.

Its subcellular location is the cell membrane. Its function is as follows. Involved in determining the orientation of cell expansion, probably by playing an important role in cellulose deposition. May act by recruiting cellulose synthesizing complexes to discrete positions on the cell surface. The polypeptide is COBRA-like protein 1 (BC1L6) (Oryza sativa subsp. japonica (Rice)).